Here is a 173-residue protein sequence, read N- to C-terminus: Crossover junction endodeoxyribonuclease RuvC (173 aa).

Residues Asp-10, Glu-71, and Asp-143 contribute to the active site. Mg(2+) contacts are provided by Asp-10, Glu-71, and Asp-143.

This sequence belongs to the RuvC family. In terms of assembly, homodimer which binds Holliday junction (HJ) DNA. The HJ becomes 2-fold symmetrical on binding to RuvC with unstacked arms; it has a different conformation from HJ DNA in complex with RuvA. In the full resolvosome a probable DNA-RuvA(4)-RuvB(12)-RuvC(2) complex forms which resolves the HJ. The cofactor is Mg(2+).

The protein resides in the cytoplasm. It carries out the reaction Endonucleolytic cleavage at a junction such as a reciprocal single-stranded crossover between two homologous DNA duplexes (Holliday junction).. The RuvA-RuvB-RuvC complex processes Holliday junction (HJ) DNA during genetic recombination and DNA repair. Endonuclease that resolves HJ intermediates. Cleaves cruciform DNA by making single-stranded nicks across the HJ at symmetrical positions within the homologous arms, yielding a 5'-phosphate and a 3'-hydroxyl group; requires a central core of homology in the junction. The consensus cleavage sequence is 5'-(A/T)TT(C/G)-3'. Cleavage occurs on the 3'-side of the TT dinucleotide at the point of strand exchange. HJ branch migration catalyzed by RuvA-RuvB allows RuvC to scan DNA until it finds its consensus sequence, where it cleaves and resolves the cruciform DNA. The protein is Crossover junction endodeoxyribonuclease RuvC of Gloeobacter violaceus (strain ATCC 29082 / PCC 7421).